A 394-amino-acid polypeptide reads, in one-letter code: NAD(P)H-quinone oxidoreductase subunit H (394 aa).

The protein belongs to the complex I 49 kDa subunit family. NDH-1 can be composed of about 15 different subunits; different subcomplexes with different compositions have been identified which probably have different functions.

It is found in the cellular thylakoid membrane. The catalysed reaction is a plastoquinone + NADH + (n+1) H(+)(in) = a plastoquinol + NAD(+) + n H(+)(out). It carries out the reaction a plastoquinone + NADPH + (n+1) H(+)(in) = a plastoquinol + NADP(+) + n H(+)(out). Its function is as follows. NDH-1 shuttles electrons from an unknown electron donor, via FMN and iron-sulfur (Fe-S) centers, to quinones in the respiratory and/or the photosynthetic chain. The immediate electron acceptor for the enzyme in this species is believed to be plastoquinone. Couples the redox reaction to proton translocation, and thus conserves the redox energy in a proton gradient. Cyanobacterial NDH-1 also plays a role in inorganic carbon-concentration. The sequence is that of NAD(P)H-quinone oxidoreductase subunit H from Acaryochloris marina (strain MBIC 11017).